The chain runs to 70 residues: Antimicrobial peptide VpCT1 (70 aa).

A signal peptide spans 1-23 (MKNQFAVLLVALVLLQLFSQSEA). Position 36 is a leucine amide (Leu-36). Positions 37 to 70 (GKRGLRNFDLEQMDDTYEPELSEADLRYLQDLLR) are excised as a propeptide.

The protein belongs to the non-disulfide-bridged peptide (NDBP) superfamily. Short antimicrobial peptide (group 4) family. As to expression, expressed by the venom gland.

Its subcellular location is the secreted. It localises to the target cell membrane. Its function is as follows. Antimicrobial peptide with potent activity against bacteria S.aureus (MIC=4.7 uM) and E.coli (MIC=31.5 uM), and pathogenic yeasts C.albicans (MIC=25 uM) and C.glabrata (MIC=12.5 uM). Is not very effective against P.aeruginosa (MIC=150 and &gt;300 uM). Also provokes moderate hemolysis on human erythrocytes (HC(50)=10.5 uM). This is Antimicrobial peptide VpCT1 from Mesomexovis punctatus (Scorpion).